The following is an 89-amino-acid chain: Small ribosomal subunit protein uS15 (89 aa).

The protein belongs to the universal ribosomal protein uS15 family. In terms of assembly, part of the 30S ribosomal subunit. Forms a bridge to the 50S subunit in the 70S ribosome, contacting the 23S rRNA.

One of the primary rRNA binding proteins, it binds directly to 16S rRNA where it helps nucleate assembly of the platform of the 30S subunit by binding and bridging several RNA helices of the 16S rRNA. Its function is as follows. Forms an intersubunit bridge (bridge B4) with the 23S rRNA of the 50S subunit in the ribosome. This Bifidobacterium longum subsp. infantis (strain ATCC 15697 / DSM 20088 / JCM 1222 / NCTC 11817 / S12) protein is Small ribosomal subunit protein uS15.